Consider the following 214-residue polypeptide: Probable nicotinate-nucleotide adenylyltransferase (214 aa).

Belongs to the NadD family.

It catalyses the reaction nicotinate beta-D-ribonucleotide + ATP + H(+) = deamido-NAD(+) + diphosphate. It participates in cofactor biosynthesis; NAD(+) biosynthesis; deamido-NAD(+) from nicotinate D-ribonucleotide: step 1/1. Its function is as follows. Catalyzes the reversible adenylation of nicotinate mononucleotide (NaMN) to nicotinic acid adenine dinucleotide (NaAD). This is Probable nicotinate-nucleotide adenylyltransferase from Aeromonas salmonicida (strain A449).